A 57-amino-acid polypeptide reads, in one-letter code: Large ribosomal subunit protein bL33 (57 aa).

Belongs to the bacterial ribosomal protein bL33 family.

This Bifidobacterium longum (strain NCC 2705) protein is Large ribosomal subunit protein bL33.